A 951-amino-acid polypeptide reads, in one-letter code: Valine--tRNA ligase (951 aa).

Residues 42-52 carry the 'HIGH' region motif; the sequence is PNVTGSLHMGH. A 'KMSKS' region motif is present at residues 554–558; sequence KMSKS. ATP is bound at residue Lys557. The stretch at 880–944 forms a coiled coil; that stretch reads AGLINKEDEL…AEAKAKLIEQ (65 aa).

Belongs to the class-I aminoacyl-tRNA synthetase family. ValS type 1 subfamily. As to quaternary structure, monomer.

It localises to the cytoplasm. It catalyses the reaction tRNA(Val) + L-valine + ATP = L-valyl-tRNA(Val) + AMP + diphosphate. Functionally, catalyzes the attachment of valine to tRNA(Val). As ValRS can inadvertently accommodate and process structurally similar amino acids such as threonine, to avoid such errors, it has a 'posttransfer' editing activity that hydrolyzes mischarged Thr-tRNA(Val) in a tRNA-dependent manner. This Shigella boydii serotype 4 (strain Sb227) protein is Valine--tRNA ligase.